A 351-amino-acid chain; its full sequence is Photosystem II D2 protein (351 aa).

The helical transmembrane segment at 39 to 59 (TAYLAIGGWLTGTTFVTSWYT) threads the bilayer. Histidine 116 is a chlorophyll a binding site. Residues 123 to 139 (GFMLRQFEISRLVGIRP) form a helical membrane-spanning segment. The pheophytin a site is built by glutamine 128 and asparagine 141. Residues 151–164 (VFVSVFLIYPLGQS) form a helical membrane-spanning segment. Histidine 196 serves as a coordination point for chlorophyll a. The helical transmembrane segment at 206 to 226 (GALLSAIHGVTVENTLYEDGE) threads the bilayer. Residues histidine 213 and phenylalanine 260 each contribute to the a plastoquinone site. Position 213 (histidine 213) interacts with Fe cation. Histidine 267 provides a ligand contact to Fe cation. Residues 277 to 293 (GLWTSSIGIIGLALNLR) traverse the membrane as a helical segment.

The protein belongs to the reaction center PufL/M/PsbA/D family. In terms of assembly, PSII is composed of 1 copy each of membrane proteins PsbA, PsbB, PsbC, PsbD, PsbE, PsbF, PsbH, PsbI, PsbJ, PsbK, PsbL, PsbM, PsbT, PsbX, PsbY, PsbZ, Psb30/Ycf12, peripheral proteins PsbO, CyanoQ (PsbQ), PsbU, PsbV and a large number of cofactors. It forms dimeric complexes. It depends on The D1/D2 heterodimer binds P680, chlorophylls that are the primary electron donor of PSII, and subsequent electron acceptors. It shares a non-heme iron and each subunit binds pheophytin, quinone, additional chlorophylls, carotenoids and lipids. There is also a Cl(-1) ion associated with D1 and D2, which is required for oxygen evolution. The PSII complex binds additional chlorophylls, carotenoids and specific lipids. as a cofactor.

It is found in the host cellular thylakoid membrane. The catalysed reaction is 2 a plastoquinone + 4 hnu + 2 H2O = 2 a plastoquinol + O2. In terms of biological role, photosystem II (PSII) is a light-driven water:plastoquinone oxidoreductase that uses light energy to abstract electrons from H(2)O, generating O(2) and a proton gradient subsequently used for ATP formation. It consists of a core antenna complex that captures photons, and an electron transfer chain that converts photonic excitation into a charge separation. The D1/D2 (PsbA/PsbD) reaction center heterodimer binds P680, the primary electron donor of PSII as well as several subsequent electron acceptors. D2 is needed for assembly of a stable PSII complex. The chain is Photosystem II D2 protein (psbD) from Synechococcus.